The chain runs to 105 residues: N(2)-fixation sustaining protein CowN (105 aa).

This sequence belongs to the CowN family.

Its function is as follows. Is required to sustain N(2)-dependent growth in the presence of low levels of carbon monoxide (CO). Probably acts by protecting the N(2) fixation ability of the nitrogenase complex, which is inactivated in the presence of CO. In Tolumonas auensis (strain DSM 9187 / NBRC 110442 / TA 4), this protein is N(2)-fixation sustaining protein CowN.